We begin with the raw amino-acid sequence, 716 residues long: Amino-acid acetyltransferase, mitochondrial (716 aa).

The transit peptide at 1–44 directs the protein to the mitochondrion; the sequence is MSPHTGWPRTVNSSLLKKHRSSLCTCQHTSSFLPRSFSTTADRH. 2 disordered regions span residues 99–119 and 487–508; these read YPKSPDENKPEPEKLATAPTL and LSSSLPMSRRGPTNNGQGTVYP. The span at 102–112 shows a compositional bias: basic and acidic residues; the sequence is SPDENKPEPEK. A compositionally biased stretch (polar residues) spans 497-508; the sequence is GPTNNGQGTVYP. The N-acetyltransferase domain maps to 537–706; it reads SRPRLKLDDP…YEAVCRSTQP (170 aa).

This sequence belongs to the acetyltransferase family.

It localises to the mitochondrion. The enzyme catalyses L-glutamate + acetyl-CoA = N-acetyl-L-glutamate + CoA + H(+). The protein operates within amino-acid biosynthesis; L-arginine biosynthesis; N(2)-acetyl-L-ornithine from L-glutamate: step 1/4. N-acetylglutamate synthase involved in arginine biosynthesis. The polypeptide is Amino-acid acetyltransferase, mitochondrial (arg2) (Neosartorya fischeri (strain ATCC 1020 / DSM 3700 / CBS 544.65 / FGSC A1164 / JCM 1740 / NRRL 181 / WB 181) (Aspergillus fischerianus)).